We begin with the raw amino-acid sequence, 30 residues long: Poly-His-poly-Gly peptide 2 (30 aa).

A compositionally biased stretch (basic residues) spans 1–18 (EDDHDHHHHHHHHHHHHG). The segment at 1-30 (EDDHDHHHHHHHHHHHHGVGGGGGGGGGGA) is disordered. A compositionally biased stretch (gly residues) spans 19-30 (VGGGGGGGGGGA).

In terms of tissue distribution, expressed by the venom gland.

It is found in the secreted. Its function is as follows. May serve as a metalloproteinase inhibitor during glandular storage. Their inhibition may be instantly disengaged, by dilution or physiochemical change, when venom is injected into tissue of the victim. This chain is Poly-His-poly-Gly peptide 2, found in Atheris nitschei (Great lakes bush viper).